The following is a 123-amino-acid chain: Cysteine-rich DPF motif domain-containing protein 1 (123 aa).

The disordered stretch occupies residues 102-123; sequence RQDLEKRKAPSKRTPSQPGSRT. Over residues 114–123 the composition is skewed to polar residues; it reads RTPSQPGSRT.

The protein belongs to the CDPF1 family.

This chain is Cysteine-rich DPF motif domain-containing protein 1 (CDPF1), found in Homo sapiens (Human).